A 770-amino-acid polypeptide reads, in one-letter code: Mitochondrial 15S rRNA processing factor CCM1 (770 aa).

Residues 1–90 (MIRLILWNNV…RSFTKVIAQH (90 aa)) constitute a mitochondrion transit peptide. Disordered regions lie at residues 28–67 (NKRKRRIPPSKPRSSNRKDGDIEPYRMTDQNQTPNTGSIA) and 90–114 (HLKPEQENDSLTSAEKPDTSQLPPI). Positions 43–53 (NRKDGDIEPYR) are enriched in basic and acidic residues. Residues 55–65 (TDQNQTPNTGS) are compositionally biased toward polar residues. 5 PPR repeats span residues 276-310 (KIDHYETMILAYVKNNHMEKIDGILAQMKKKNIEI), 311-346 (SKMIYTSIVRGYIFYQKDHQRALDTFDSMKFLSQKT), 349-383 (DEKVYTDVIVSCVMHREIERALDLYYELKDKGMNV), 384-419 (NQNLLSTLAKGCSRSKQFKTQAWNFLFQVYDHGWVP), and 420-454 (NLQTYEHMLYIAARDGDVELTRVLFYKMLQTNSVT). Residues 588–598 (RQDEPTEKATT) are compositionally biased toward basic and acidic residues. Residues 588–610 (RQDEPTEKATTTEEQITSSEPDT) are disordered. Over residues 599 to 610 (TEEQITSSEPDT) the composition is skewed to polar residues. One copy of the PPR 6 repeat lies at 636–666 (DSYLYNLAIKAAGKFKDYSFAQQILHERGQF).

It belongs to the CCM1 family. In terms of assembly, binds to mitochondrial small subunit 15S rRNA.

The protein resides in the mitochondrion. Its function is as follows. Regulates mitochondrial small subunit maturation by controlling 15S rRNA 5'-end processing. Localizes to the 5' precursor of the 15S rRNA in a position that is subsequently occupied by mS47 in the mature yeast mtSSU. Uses structure and sequence-specific RNA recognition, binding to a single-stranded region of the precursor and specifically recognizing bases -6 to -1. The exchange of Ccm1 for mS47 is coupled to the irreversible removal of precursor rRNA that is accompanied by conformational changes of the mitoribosomal proteins uS5m and mS26. These conformational changes signal completion of 5'-end rRNA processing through protection of the mature 5'-end of the 15S rRNA and stabilization of mS47. The removal of the 5' precursor together with the dissociation of Ccm1 may be catalyzed by the 5'-3' exoribonuclease Pet127. Involved in the specific removal of group I introns in mitochondrial encoded transcripts. This Candida albicans (strain WO-1) (Yeast) protein is Mitochondrial 15S rRNA processing factor CCM1 (CCM1).